The sequence spans 661 residues: 1-deoxy-D-xylulose-5-phosphate synthase (661 aa).

Thiamine diphosphate-binding positions include histidine 98 and alanine 139–serine 141. Aspartate 170 is a Mg(2+) binding site. Thiamine diphosphate-binding positions include glycine 171–alanine 172, asparagine 199, tyrosine 309, and glutamate 391. Asparagine 199 contributes to the Mg(2+) binding site.

Belongs to the transketolase family. DXPS subfamily. In terms of assembly, homodimer. Mg(2+) serves as cofactor. Thiamine diphosphate is required as a cofactor.

It catalyses the reaction D-glyceraldehyde 3-phosphate + pyruvate + H(+) = 1-deoxy-D-xylulose 5-phosphate + CO2. Its pathway is metabolic intermediate biosynthesis; 1-deoxy-D-xylulose 5-phosphate biosynthesis; 1-deoxy-D-xylulose 5-phosphate from D-glyceraldehyde 3-phosphate and pyruvate: step 1/1. Catalyzes the acyloin condensation reaction between C atoms 2 and 3 of pyruvate and glyceraldehyde 3-phosphate to yield 1-deoxy-D-xylulose-5-phosphate (DXP). This Bradyrhizobium diazoefficiens (strain JCM 10833 / BCRC 13528 / IAM 13628 / NBRC 14792 / USDA 110) protein is 1-deoxy-D-xylulose-5-phosphate synthase.